The chain runs to 382 residues: Mannitol-1-phosphate 5-dehydrogenase (382 aa).

NAD(+) is bound at residue 3 to 14 (ALHFGAGNIGRG). Lysine 269 carries the N6-acetyllysine modification.

The protein belongs to the mannitol dehydrogenase family.

The enzyme catalyses D-mannitol 1-phosphate + NAD(+) = beta-D-fructose 6-phosphate + NADH + H(+). This chain is Mannitol-1-phosphate 5-dehydrogenase, found in Escherichia coli O81 (strain ED1a).